The sequence spans 395 residues: Axin-like protein 1 (395 aa).

An RGS domain is found at 4-132 (RSKTFSDRIL…TTTADVSNTW (129 aa)). The tract at residues 190 to 230 (QETKNSSETEEEKKKERSADPYGSDGFAPPPQSTQTHTLRN) is disordered. The span at 194–208 (NSSETEEEKKKERSA) shows a compositional bias: basic and acidic residues. Positions 301–386 (EIQKLTVELR…RITAICRMCP (86 aa)) constitute a DIX domain.

As to quaternary structure, interacts with bar-1, dsh-2, gsk-3, and mig-5.

Functionally, works in parallel with pry-1 in negatively regulating bar-1 signaling in vulval precursor cells and Q neuroblasts. Shown to have a role in excretory cell development. The chain is Axin-like protein 1 (axl-1) from Caenorhabditis briggsae.